A 189-amino-acid chain; its full sequence is Protein shisa-like-2A (189 aa).

2 helical membrane passes run 48–68 and 70–90; these read SFFPYEHNYMWWLSIGALVGL and TAAVVLLAFLITACVLCYLFI. The segment at 98–189 is disordered; that stretch reads LDPGLSLQTT…PTPGPHGPVP (92 aa). Positions 140–171 are enriched in polar residues; it reads NTHLESNKKQTVSPTCLPQNQFMATVTASNIP.

The protein belongs to the shisa family.

The protein localises to the membrane. This chain is Protein shisa-like-2A (Shisal2a), found in Mus musculus (Mouse).